The following is a 63-amino-acid chain: Large ribosomal subunit protein uL29 (63 aa).

The protein belongs to the universal ribosomal protein uL29 family.

The polypeptide is Large ribosomal subunit protein uL29 (Shewanella oneidensis (strain ATCC 700550 / JCM 31522 / CIP 106686 / LMG 19005 / NCIMB 14063 / MR-1)).